Here is a 332-residue protein sequence, read N- to C-terminus: MKVTFEQLKAAFNRALISRGVDSETADACAEMFARTTESGVYSHGVNRFPRFIQQLENGDIIPDAQPKRITSLGAIEQWDAQRSIGNLTAKKMMDRAIELAADHGIGLVALRNANHWMRGGSYGWQAAEKGYIGICWTNSIAVMPPWGAKECRIGTNPLIVAIPSTPITMVDMSMSMFSYGMLEVNRLAGRQLPVDGGFDDEGNLTKEPGVIEKNRRILPMGYWKGSGMSIVLDMIATLLSDGASVAEVTQDNSDEYGISQIFIAIEVDKLIDGPTRDAKLQRIMDYVTTAERADENQAIRLPGHEFTTLLAENRRNGITVDDSVWAKIQAL.

The Proton donor role is filled by His-44. NAD(+)-binding positions include 168–174 (ITMVDMS), 224–225 (WK), and 304–306 (GHE).

It belongs to the LDH2/MDH2 oxidoreductase family. DlgD subfamily. In terms of assembly, homodimer.

The protein localises to the cytoplasm. The catalysed reaction is 3-dehydro-L-gulonate + NAD(+) = 2,3-dioxo-L-gulonate + NADH + H(+). It carries out the reaction 3-dehydro-L-gulonate + NADP(+) = 2,3-dioxo-L-gulonate + NADPH + H(+). In terms of biological role, catalyzes the reduction of 2,3-diketo-L-gulonate in the presence of NADH, to form 3-keto-L-gulonate. This is 2,3-diketo-L-gulonate reductase from Shigella boydii serotype 4 (strain Sb227).